The chain runs to 442 residues: D-serine dehydratase (442 aa).

Lysine 118 is subject to N6-(pyridoxal phosphate)lysine.

The protein belongs to the serine/threonine dehydratase family. DsdA subfamily. Monomer. Pyridoxal 5'-phosphate serves as cofactor.

The enzyme catalyses D-serine = pyruvate + NH4(+). This Shigella flexneri serotype 5b (strain 8401) protein is D-serine dehydratase.